Reading from the N-terminus, the 148-residue chain is UPF0179 protein Mboo_1959 (148 aa).

Belongs to the UPF0179 family.

In Methanoregula boonei (strain DSM 21154 / JCM 14090 / 6A8), this protein is UPF0179 protein Mboo_1959.